A 349-amino-acid chain; its full sequence is D-alanine--D-alanine ligase (349 aa).

The ATP-grasp domain occupies 133–335; the sequence is QVLESATTIP…YSVLIEELVS (203 aa). 163-218 is an ATP binding site; the sequence is EEKLIYPVFVKPANMGSSVGISKAENRTDLKQAIALALKYDSRVLIEQGVDAREIE. Residues D289, E302, and N304 each contribute to the Mg(2+) site.

The protein belongs to the D-alanine--D-alanine ligase family. Mg(2+) is required as a cofactor. It depends on Mn(2+) as a cofactor.

The protein resides in the cytoplasm. The enzyme catalyses 2 D-alanine + ATP = D-alanyl-D-alanine + ADP + phosphate + H(+). It participates in cell wall biogenesis; peptidoglycan biosynthesis. Its function is as follows. Cell wall formation. This Streptococcus mutans serotype c (strain ATCC 700610 / UA159) protein is D-alanine--D-alanine ligase.